The primary structure comprises 1476 residues: Cystic fibrosis transmembrane conductance regulator (1476 aa).

The Cytoplasmic portion of the chain corresponds to 1–77 (MQKSPLEKAS…QLIHALRRCF (77 aa)). The helical transmembrane segment at 78–98 (VWRFVFYGVLLYLGEVTKAVQ) threads the bilayer. Residues 81–365 (FVFYGVLLYL…TAVQIWYDSL (285 aa)) form the ABC transmembrane type-1 1 domain. At 99–122 (PVLLGRIIASYDPDNTEERSIAIY) the chain is on the extracellular side. A helical membrane pass occupies residues 123–146 (LGIGLCLLFIVRTLLLHPAIFGLH). Topologically, residues 147-195 (HIGMQMRIAMFSLIYKKTLKLSSRVLDKISIGQLISLLSNNLNKFDEGL) are cytoplasmic. Residues 196-216 (ALAHFIWIAPLQVVLLMGLLW) traverse the membrane as a helical segment. At 217–222 (DLLQFS) the chain is on the extracellular side. The helical transmembrane segment at 223–243 (AFCGLGLLIVLVIFQAILGKM) threads the bilayer. Residues 244–298 (MVKYRDKRAAKINERLVITSEVIDNIYSVKAYCWESAMEKIIESLREEELKMTRR) lie on the Cytoplasmic side of the membrane. A helical membrane pass occupies residues 299–319 (SAYMRFFTSSAFFFSGFFVVF). At 320 to 339 (LSVLPYTVINGIVLRKIFTT) the chain is on the extracellular side. The helical transmembrane segment at 340-358 (ISFCIVLRMSVTRQFPTAV) threads the bilayer. Residues 359 to 853 (QIWYDSLGMI…YLRYFTLHRG (495 aa)) are Cytoplasmic-facing. Residues W401, 458–465 (GSTGAGKT), and Q493 each bind ATP. Residues 412–646 (VQLNNDDRKT…RPDFSSKLMG (235 aa)) form the ABC transporter 1 domain. The S-palmitoyl cysteine moiety is linked to residue C524. Phosphoserine occurs at positions 549 and 660. The interval 654 to 826 (TEERRSSILT…EEINEEDLKE (173 aa)) is disordered R region. S670 is modified (phosphoserine; by PKA). Phosphoserine is present on residues S684, S698, and S710. T715 is modified (phosphothreonine). Phosphoserine occurs at positions 732, 763, 785, 790, and 808. Residues 854–874 (LFAVLIWCVLVFLVEVAASLF) form a helical membrane-spanning segment. One can recognise an ABC transmembrane type-1 2 domain in the interval 854–1153 (LFAVLIWCVL…SSIDTDSLMR (300 aa)). Residues 875–913 (VLWLLKNNPVNGGNNGTKIANTSYVVVITSSSFYYIFYI) lie on the Extracellular side of the membrane. Residues N889 and N895 are each glycosylated (N-linked (GlcNAc...) asparagine). A discontinuously helical transmembrane segment spans residues 914 to 934 (YVGVADTLLALSLFRGLPLVH). The Cytoplasmic portion of the chain corresponds to 935–985 (TLITASKILHRKMLHSILHAPMSTFNKLKAGGILNRFSKDIAILDDFLPLT). Residues 986–1006 (IFDFIQLLFIVVGAIIVVSAL) traverse the membrane as a helical segment. Residues 1007–1008 (QP) are Extracellular-facing. Residues 1009 to 1029 (YIFLATVPGLAVFILLRAYFL) form a helical membrane-spanning segment. The Cytoplasmic portion of the chain corresponds to 1030–1090 (HTSQQLKQLE…TANWFMYLAT (61 aa)). A helical transmembrane segment spans residues 1091–1111 (LRWFQMRIDMIFVLFFIVVTF). Over 1112 to 1125 (ISILTTGEGEGTTG) the chain is Extracellular. The helical transmembrane segment at 1126–1146 (IILTLAMNIMSTLQWAVNSSI) threads the bilayer. The Cytoplasmic portion of the chain corresponds to 1147 to 1476 (DTDSLMRSVS…TEEEVQETRL (330 aa)). The ABC transporter 2 domain maps to 1208–1439 (VKDLTVKYVD…KSVFQRALSS (232 aa)). Residues Y1215 and 1240–1247 (GRTGSGKS) contribute to the ATP site. The segment at 1382 to 1476 (RVLRQAFAGC…TEEEVQETRL (95 aa)) is interaction with GORASP2. C1391 carries the S-palmitoyl cysteine lipid modification. Phosphoserine occurs at positions 1440 and 1452. Residues 1445 to 1456 (LFHGRHSSKQKP) are compositionally biased toward basic residues. Residues 1445–1476 (LFHGRHSSKQKPRTQITAVKEETEEEVQETRL) form a disordered region. The span at 1466–1476 (ETEEEVQETRL) shows a compositional bias: acidic residues. The short motif at 1474 to 1476 (TRL) is the PDZ-binding element.

This sequence belongs to the ABC transporter superfamily. ABCC family. CFTR transporter (TC 3.A.1.202) subfamily. As to quaternary structure, monomer; does not require oligomerization for channel activity. May form oligomers in the membrane. Interacts with SLC4A7 through NHERF1. Interacts with SHANK2. Interacts with NHERF1 and MYO6. Interacts (via C-terminus) with GOPC (via PDZ domain); this promotes CFTR internalization and thereby decreases channel activity. Interacts with SLC4A7 through NHERF1. Found in a complex with MYO5B and RAB11A. Interacts with ANO1. Interacts with SLC26A8. Interacts with AHCYL1; the interaction increases CFTR activity. Interacts with CSE1L. The core-glycosylated form interacts with GORASP2 (via PDZ GRASP-type 1 domain) in respone to ER stress. Interacts with MARCHF2; the interaction leads to CFTR ubiqtuitination and degradation. Interacts with ADGRG2. Post-translationally, N-glycosylated. Phosphorylated; cAMP treatment promotes phosphorylation and activates the channel. Dephosphorylation decreases the ATPase activity (in vitro). Phosphorylation at PKA sites activates the channel. Phosphorylation at PKC sites enhances the response to phosphorylation by PKA. Phosphorylated by AMPK; this inhibits channel activity. In terms of processing, ubiquitinated, leading to its degradation in the lysosome. Deubiquitination by USP10 in early endosomes enhances its endocytic recycling to the cell membrane. Ubiquitinated by RNF185 during ER stress. Ubiquitinated by MARCHF2. Detected in epithelial cells in nasopharynx, submandibular gland, pancreas and ileum (at protein level). Expressed in the epididymis. In the caput section of the epididymis, expressed uniformly on both the luminal and basolateral sides of the ducts and on sperm in the caput lumen (at protein level). In the cauda, detected along the luminal border but not continuously and is also expressed on the basolateral surface. Within the caudal lumen, detected on sperm.

The protein resides in the apical cell membrane. Its subcellular location is the early endosome membrane. The protein localises to the cell membrane. It is found in the recycling endosome membrane. It localises to the endoplasmic reticulum membrane. The protein resides in the nucleus. The catalysed reaction is ATP + H2O + closed Cl(-) channel = ADP + phosphate + open Cl(-) channel.. It catalyses the reaction chloride(in) = chloride(out). It carries out the reaction hydrogencarbonate(in) = hydrogencarbonate(out). The enzyme catalyses ATP + H2O = ADP + phosphate + H(+). In terms of biological role, epithelial ion channel that plays an important role in the regulation of epithelial ion and water transport and fluid homeostasis. Mediates the transport of chloride ions across the cell membrane. Possesses an intrinsic ATPase activity and utilizes ATP to gate its channel; the passive flow of anions through the channel is gated by cycles of ATP binding and hydrolysis by the ATP-binding domains. The ion channel is also permeable to HCO(3)(-); selectivity depends on the extracellular chloride concentration. Exerts its function also by modulating the activity of other ion channels and transporters. Contributes to the regulation of the pH and the ion content of the epithelial fluid layer. Modulates the activity of the epithelial sodium channel (ENaC) complex, in part by regulating the cell surface expression of the ENaC complex. May regulate bicarbonate secretion and salvage in epithelial cells by regulating the transporter SLC4A7. Can inhibit the chloride channel activity of ANO1. Plays a role in the chloride and bicarbonate homeostasis during sperm epididymal maturation and capacitation. In Rattus norvegicus (Rat), this protein is Cystic fibrosis transmembrane conductance regulator.